The following is a 477-amino-acid chain: E3 ubiquitin-protein ligase TRIM17 (477 aa).

The RING-type zinc-finger motif lies at 16–66 (CSICLDYFTDPVMTACGHNFCRECIQMSWEKGKGKKGKKKQKGSFPCPECR). Residues 94–135 (HKRDLCQIHQEPLKLFCQDDQTPICVVCREAQEHRMHRVLPL) form a B box-type zinc finger. Zn(2+) is bound by residues Cys-99, His-102, Cys-121, and His-127. The stretch at 135-225 (LDEAAREYKL…GKLQDSKASL (91 aa)) forms a coiled coil. The 200-residue stretch at 276–475 (AIKTVCRVPG…MVISTVTMWV (200 aa)) folds into the B30.2/SPRY domain.

This sequence belongs to the TRIM/RBCC family. As to quaternary structure, interacts (via coiled coil) with TRIM44 (via coiled coil). Interacts with TRIM28; this interaction prevents TRIM28 activity on BCL2A1. Interacts with TRIM41; this interaction prevents TRIM41 activity on ZSCAN2. Interacts with BECN1. Interacts with NFATC3 and NFATC4; these interactions prevent NFATC3 and NFATC4 nuclear localization. In terms of processing, auto-ubiquitinated. Expressed almost exclusively in the testis.

Its subcellular location is the cytoplasm. The protein resides in the lysosome. The enzyme catalyses S-ubiquitinyl-[E2 ubiquitin-conjugating enzyme]-L-cysteine + [acceptor protein]-L-lysine = [E2 ubiquitin-conjugating enzyme]-L-cysteine + N(6)-ubiquitinyl-[acceptor protein]-L-lysine.. It participates in protein modification; protein ubiquitination. In terms of biological role, E3 ubiquitin ligase that plays important roles in the regulation of neuronal apoptosis, selective autophagy or cell proliferation. Stimulates the degradation of kinetochore ZW10 interacting protein ZWINT in a proteasome-dependent manner, leading to negative regulation of cell proliferation. Inhibits autophagic degradation of diverse known targets while contributing to autophagy of midbodies. Autophagy-inhibitory activity involves MCL1, which TRIM17 assembles into complexes with the key autophagy regulator BECN1. Controls neuronal apoptosis by mediating ubiquitination and degradation of MCL1 to initiate neuronal death. In addition, regulates NFAT transcription factors NFATC3 and NFATC4 activities by preventing their nuclear localization, thus inhibiting their transcriptional activities. Decreases TRIM41-mediated degradation of ZSCAN2 thereby stimulating alpha-synuclein/SNCA transcription in neuronal cells. Prevents the E3 ubiquitin-ligase activity of TRIM28 and its interaction with anti-apoptotic BCL2A1, blocking TRIM28 from ubiquitinating BCL2A1. In Rattus norvegicus (Rat), this protein is E3 ubiquitin-protein ligase TRIM17 (Trim17).